The chain runs to 663 residues: Polyunsaturated fatty acid lipoxygenase ALOX15 (663 aa).

Residues 2–115 form the PLAT domain; the sequence is GVYRVCVSTG…VQSLPVGTGC (114 aa). Residues 116-663 enclose the Lipoxygenase domain; that stretch reads TTVGDPQGLF…PSIVENSVAI (548 aa). Fe cation-binding residues include H361, H366, H541, H545, and I663.

This sequence belongs to the lipoxygenase family. In terms of assembly, interacts with PEBP1; in response to IL13/interleukin-13, prevents the interaction of PEBP1 with RAF1 to activate the ERK signaling cascade. Fe cation serves as cofactor. In terms of tissue distribution, detected in reticulocytes (at protein level).

It is found in the cytoplasm. The protein resides in the cytosol. Its subcellular location is the cell membrane. It localises to the lipid droplet. It carries out the reaction (5Z,8Z,11Z,14Z)-eicosatetraenoate + O2 = (12S)-hydroperoxy-(5Z,8Z,10E,14Z)-eicosatetraenoate. The catalysed reaction is (5Z,8Z,11Z,14Z)-eicosatetraenoate + O2 = (15S)-hydroperoxy-(5Z,8Z,11Z,13E)-eicosatetraenoate. It catalyses the reaction (9Z,12Z)-octadecadienoate + O2 = (13S)-hydroperoxy-(9Z,11E)-octadecadienoate. The enzyme catalyses (5Z,8Z,11Z,14Z)-eicosatetraenoate + 2 O2 = (14R,15S)-dihydroperoxy-(5Z,8Z,10E,12E)-eicosatetraenoate. It carries out the reaction (5Z,8Z,11Z,14Z)-eicosatetraenoate + 2 O2 = (8S,15S)-dihydroperoxy-(5Z,9E,11Z,13E)-eicosatetraenoate. The catalysed reaction is (14S,15R)-epoxy-(5Z,8Z,11Z)-eicosatrienoate + O2 = (8S)-hydroperoxy-(14S,15R)-epoxy-(5Z,9E,11Z)-eicosatrienoate. It catalyses the reaction (14S,15R)-epoxy-(5Z,8Z,11Z)-eicosatrienoate + O2 = (12S)-hydroperoxy-(14S,15R)-epoxy-(5Z,8Z,10E)-eicosatrienoate. The enzyme catalyses (14R,15S)-epoxy-(5Z,8Z,11Z)-eicosatrienoate + O2 = (5S)-hydroperoxy-(14R,15S)-epoxy-(6E,8Z,11Z)-eicosatrienoate. It carries out the reaction (14R,15S)-epoxy-(5Z,8Z,11Z)-eicosatrienoate + O2 = (12S)-hydroperoxy-(14R,15S)-epoxy-(5Z,8Z,10E)-eicosatrienoate. The catalysed reaction is (15R)-hydroperoxy-(5Z,8Z,11Z,13E)-eicosatetraenoate = 15-oxo-(5Z,8Z,11Z,13E)-eicosatetraenoate + H2O. It catalyses the reaction (15S)-hydroperoxy-(5Z,8Z,11Z,13E)-eicosatetraenoate = (14S,15S)-epoxy-(5Z,8Z,10E,12E)-eicosatetraenoate + H2O. The enzyme catalyses (12S)-hydroperoxy-(5Z,8Z,10E,14Z)-eicosatetraenoate = (8S)-hydroxy-(11S,12S)-epoxy-(5Z,9E,14Z)-eicosatrienoate. It carries out the reaction (4Z,7Z,10Z,13Z,16Z)-docosapentaenoate + O2 = 14-hydroperoxy-(4Z,7Z,10Z,12E,16Z)-docosapentaenoate. The catalysed reaction is (7Z,10Z,13Z,16Z,19Z)-docosapentaenoate + O2 = 14-hydroperoxy-(7Z,10Z,12E,16Z,19Z)-docosapentaenoate. It catalyses the reaction (4Z,7Z,10Z,13Z,16Z,19Z)-docosahexaenoate + O2 = (14S)-hydroperoxy-(4Z,7Z,10Z,12E,16Z,19Z)-docosahexaenoate. The enzyme catalyses (4Z,7Z,10Z,13Z,16Z,19Z)-docosahexaenoate + O2 = (17S)-hydroperoxy-(4Z,7Z,10Z,13Z,15E,19Z)-docosahexaenoate. It carries out the reaction (7S)-hydroperoxy-(4Z,8E,10Z,13Z,16Z,19Z)-docosahexaenoate + O2 = (7S,14S)-dihydroperoxy-(4Z,8E,10Z,12E,16Z,19Z)-docosahexaenoate. The catalysed reaction is (7S)-hydroperoxy-(4Z,8E,10Z,13Z,16Z,19Z)-docosahexaenoate + O2 = (7S,17S)-dihydroperoxy-(4Z,8E,10Z,13Z,15E,19Z)-docosahexaenoate. It catalyses the reaction (4Z,7Z,10Z,13Z,16Z,19Z)-docosahexaenoate + O2 = (11S)-hydroperoxy-(4Z,7Z,9E,13Z,16Z,19Z)-docosahexaenoate. The enzyme catalyses N-(5Z,8Z,11Z,14Z)-eicosatetraenoyl-taurine + O2 = N-(15S)-hydroperoxy-(5Z,8Z,11Z,13E)-eicosatetraenoyl-taurine. It carries out the reaction N-(5Z,8Z,11Z,14Z)-eicosatetraenoyl-gamma-aminobutanoate + O2 = N-(15S)-hydroperoxy-(5Z,8Z,11Z,13E)-eicosatetraenoyl-gamma-aminobutanoate. The catalysed reaction is N-(5Z,8Z,11Z,14Z)-eicosatetraenoyl-glycine + O2 = N-(15S)-hydroperoxy-(5Z,8Z,11Z,13E)-eicosatetraenoyl-glycine. It catalyses the reaction N-(5Z,8Z,11Z,14Z)-eicosatetraenoyl-L-alanine + O2 = N-(15S)-hydroperoxy-(5Z,8Z,11Z,13E)-eicosatetraenoyl-alanine. The enzyme catalyses N-(5Z,8Z,11Z,14Z)-eicosatetraenoyl-taurine + O2 = N-(12S)-hydroperoxy-(5Z,8Z,10E,14Z)-eicosatetraenoyl-taurine. It carries out the reaction N-(5Z,8Z,11Z,14Z)-eicosatetraenoyl-gamma-aminobutanoate + O2 = N-(12S)-hydroperoxy-(5Z,8Z,10E,14Z)-eicosatetraenoyl-gamma-aminobutanoate. The catalysed reaction is N-(5Z,8Z,11Z,14Z)-eicosatetraenoyl-glycine + O2 = N-(12S)-hydroperoxy-(5Z,8Z,10E,14Z)-eicosatetraenoyl-glycine. It catalyses the reaction N-(5Z,8Z,11Z,14Z)-eicosatetraenoyl-L-alanine + O2 = N-(12S)-hydroperoxy-(5Z,8Z,10E,14Z)-eicosatetraenoyl-alanine. Its pathway is lipid metabolism; hydroperoxy eicosatetraenoic acid biosynthesis. Functionally, non-heme iron-containing dioxygenase that catalyzes the stereo-specific peroxidation of free and esterified polyunsaturated fatty acids generating a spectrum of bioactive lipid mediators. It inserts peroxyl groups at C12 or C15 of arachidonate ((5Z,8Z,11Z,14Z)-eicosatetraenoate) producing both 12-hydroperoxyeicosatetraenoate/12-HPETE and 15-hydroperoxyeicosatetraenoate/15-HPETE. It may then act on 12-HPETE to produce hepoxilins, which may show pro-inflammatory properties. Can also peroxidize linoleate ((9Z,12Z)-octadecadienoate) to 13-hydroperoxyoctadecadienoate. May participate in the sequential oxidations of DHA ((4Z,7Z,10Z,13Z,16Z,19Z)-docosahexaenoate) to generate specialized pro-resolving mediators (SPMs)like resolvin D5 ((7S,17S)-diHPDHA) and (7S,14S)-diHPDHA, that actively down-regulate the immune response and have anti-aggregation properties with platelets. Can convert epoxy fatty acids to hydroperoxy-epoxides derivatives followed by an intramolecular nucleophilic substitution leading to the formation of monocyclic endoperoxides. Plays an important role during the maintenance of self-tolerance by peroxidizing membrane-bound phosphatidylethanolamine which can then signal the sorting process for clearance of apoptotic cells during inflammation and prevent an autoimmune response. In addition to its role in the immune and inflammatory responses, this enzyme may play a role in epithelial wound healing in the cornea through production of lipoxin A4 (LXA(4)) and docosahexaenoic acid-derived neuroprotectin D1 (NPD1; 10R,17S-HDHA), both lipid autacoids exhibit anti-inflammatory and neuroprotective properties. Furthermore, it may regulate actin polymerization which is crucial for several biological processes such as the phagocytosis of apoptotic cells. It is also implicated in the generation of endogenous ligands for peroxisome proliferator activated receptor (PPAR-gamma), hence modulating macrophage development and function. It may also exert a negative effect on skeletal development by regulating bone mass through this pathway. As well as participates in ER stress and downstream inflammation in adipocytes, pancreatic islets, and liver. Finally, it is also involved in the cellular response to IL13/interleukin-13. The sequence is that of Polyunsaturated fatty acid lipoxygenase ALOX15 from Oryctolagus cuniculus (Rabbit).